Consider the following 95-residue polypeptide: Sec-independent protein translocase protein TatA (95 aa).

A helical membrane pass occupies residues 1-21 (MGSMSVWHWVIVAVVVMLLFG). The segment at 42–95 (GMADDETQPNTATSVPPVGPNDPVRTLPHQGAPGTAPQPPHVQPHVPAGDHKAV) is disordered.

This sequence belongs to the TatA/E family. The Tat system comprises two distinct complexes: a TatABC complex, containing multiple copies of TatA, TatB and TatC subunits, and a separate TatA complex, containing only TatA subunits. Substrates initially bind to the TatABC complex, which probably triggers association of the separate TatA complex to form the active translocon.

The protein resides in the cell inner membrane. Its function is as follows. Part of the twin-arginine translocation (Tat) system that transports large folded proteins containing a characteristic twin-arginine motif in their signal peptide across membranes. TatA could form the protein-conducting channel of the Tat system. The chain is Sec-independent protein translocase protein TatA from Methylorubrum extorquens (strain PA1) (Methylobacterium extorquens).